Here is a 282-residue protein sequence, read N- to C-terminus: Trihydroxynaphthalene reductase PfmaI (282 aa).

NADP(+)-binding residues include I41, N114, and R147. Catalysis depends on proton donor residues S164 and Y178. 4 residues coordinate NADP(+): Y178, K182, I211, and T213. K182 serves as the catalytic Lowers pKa of active site Tyr.

It belongs to the short-chain dehydrogenases/reductases (SDR) family.

The protein operates within pigment biosynthesis; melanin biosynthesis. In terms of biological role, trihydroxynaphthalene reductase involved the biosynthesis of dihydroxynaphthalene (DHN)-melanin, a bluish-green pigment forming a dark layer in the conidial wall that protects the conidia from UV radiations. The first step of the pathway is the production of the pentaketide 1,3,6,8-tetrahydroxynaphthalene (1,3,6,8-THN or T4HN) by the polyketide synthase PfmaE though condensation of acetyl-CoA with malonyl-CoA. T4HN is not stable and easily oxidizes into the stable form flaviolin. T4HN is also substrate of the hydroxynaphthalene reductase PfmaG to yield scytalone. The scytalone dehydratase PfmaJ then reduces scytalone to 1,3,8-THN. 1,3,8-THN is then substrate of the hydroxynaphthalene reductase PfmaI to yield vermelone. Vermelone is further converted by the multicopper oxidase PfmaD to 1,8-DHN. Finally the laccase PFICI_06862 transforms 1,8-DHN to DHN-melanin. The roles of the 5-oxoprolinase PfmaA and the proline iminopeptidase PfmaB within the cluster have not been elucidated yet. In Pestalotiopsis fici (strain W106-1 / CGMCC3.15140), this protein is Trihydroxynaphthalene reductase PfmaI.